The chain runs to 199 residues: dITP/XTP pyrophosphatase (199 aa).

Substrate is bound at residue 7 to 12; the sequence is SNNRGK. The Proton acceptor role is filled by aspartate 68. A Mg(2+)-binding site is contributed by aspartate 68. Substrate-binding positions include alanine 69, 154–157, lysine 177, and 182–183; these read FGFD and HR.

The protein belongs to the HAM1 NTPase family. Homodimer. Mg(2+) serves as cofactor.

The catalysed reaction is XTP + H2O = XMP + diphosphate + H(+). It catalyses the reaction dITP + H2O = dIMP + diphosphate + H(+). The enzyme catalyses ITP + H2O = IMP + diphosphate + H(+). Functionally, pyrophosphatase that catalyzes the hydrolysis of nucleoside triphosphates to their monophosphate derivatives, with a high preference for the non-canonical purine nucleotides XTP (xanthosine triphosphate), dITP (deoxyinosine triphosphate) and ITP. Seems to function as a house-cleaning enzyme that removes non-canonical purine nucleotides from the nucleotide pool, thus preventing their incorporation into DNA/RNA and avoiding chromosomal lesions. The polypeptide is dITP/XTP pyrophosphatase (Albidiferax ferrireducens (strain ATCC BAA-621 / DSM 15236 / T118) (Rhodoferax ferrireducens)).